The following is a 122-amino-acid chain: Large ribosomal subunit protein uL14 (122 aa).

Belongs to the universal ribosomal protein uL14 family. Part of the 50S ribosomal subunit. Forms a cluster with proteins L3 and L19. In the 70S ribosome, L14 and L19 interact and together make contacts with the 16S rRNA in bridges B5 and B8.

Binds to 23S rRNA. Forms part of two intersubunit bridges in the 70S ribosome. The chain is Large ribosomal subunit protein uL14 from Clavibacter michiganensis subsp. michiganensis (strain NCPPB 382).